The following is a 108-amino-acid chain: Phosphocarrier protein HPr (108 aa).

The region spanning 21–108 (ELQATCIVKN…DAFSSGFGEL (88 aa)) is the HPr domain. His-35 functions as the Pros-phosphohistidine intermediate in the catalytic mechanism.

Belongs to the HPr family.

The protein resides in the cytoplasm. General (non sugar-specific) component of the phosphoenolpyruvate-dependent sugar phosphotransferase system (sugar PTS). This major carbohydrate active-transport system catalyzes the phosphorylation of incoming sugar substrates concomitantly with their translocation across the cell membrane. The phosphoryl group from phosphoenolpyruvate (PEP) is transferred to the phosphoryl carrier protein HPr by enzyme I. Phospho-HPr then transfers it to the PTS EIIA domain. The protein is Phosphocarrier protein HPr (ptsH) of Chlamydia pneumoniae (Chlamydophila pneumoniae).